Reading from the N-terminus, the 96-residue chain is U-scoloptoxin(06)-Sm1a (96 aa).

A signal peptide spans 1–23; that stretch reads MNSFSFFLVIFVVLNLQVAKLMA.

The protein belongs to the scoloptoxin-06 family. Post-translationally, contains 2 disulfide bonds. As to expression, expressed by the venom gland.

The protein localises to the secreted. The protein is U-scoloptoxin(06)-Sm1a of Scolopendra morsitans (Tanzanian blue ringleg centipede).